Here is an 84-residue protein sequence, read N- to C-terminus: ATP synthase subunit c (84 aa).

The next 2 membrane-spanning stretches (helical) occupy residues 9 to 29 (IIGA…GFAI) and 54 to 74 (IVAG…LLFI).

It belongs to the ATPase C chain family. F-type ATPases have 2 components, F(1) - the catalytic core - and F(0) - the membrane proton channel. F(1) has five subunits: alpha(3), beta(3), gamma(1), delta(1), epsilon(1). F(0) has three main subunits: a(1), b(2) and c(10-14). The alpha and beta chains form an alternating ring which encloses part of the gamma chain. F(1) is attached to F(0) by a central stalk formed by the gamma and epsilon chains, while a peripheral stalk is formed by the delta and b chains.

Its subcellular location is the cell inner membrane. F(1)F(0) ATP synthase produces ATP from ADP in the presence of a proton or sodium gradient. F-type ATPases consist of two structural domains, F(1) containing the extramembraneous catalytic core and F(0) containing the membrane proton channel, linked together by a central stalk and a peripheral stalk. During catalysis, ATP synthesis in the catalytic domain of F(1) is coupled via a rotary mechanism of the central stalk subunits to proton translocation. Functionally, key component of the F(0) channel; it plays a direct role in translocation across the membrane. A homomeric c-ring of between 10-14 subunits forms the central stalk rotor element with the F(1) delta and epsilon subunits. This chain is ATP synthase subunit c, found in Glaesserella parasuis serovar 5 (strain SH0165) (Haemophilus parasuis).